Consider the following 134-residue polypeptide: Small ribosomal subunit protein uS8 (134 aa).

This sequence belongs to the universal ribosomal protein uS8 family. As to quaternary structure, part of the 30S ribosomal subunit. Contacts proteins S5 and S12.

Its function is as follows. One of the primary rRNA binding proteins, it binds directly to 16S rRNA central domain where it helps coordinate assembly of the platform of the 30S subunit. This is Small ribosomal subunit protein uS8 from Sphingopyxis alaskensis (strain DSM 13593 / LMG 18877 / RB2256) (Sphingomonas alaskensis).